Consider the following 410-residue polypeptide: MLRDTLKKAEKARDKKALYGEDIDLERFIKEEAGEHEEVPRAREVPKKVQETLLKVGVDPEERERAGTFIQVDQSGICTTCASESIEIMGMNVALDRYSWLKDYMWKAVAVDTDKYTATTALREAEGEMGGYFIRSMPGSREVFPLQACMFIGDENVMQTAHNIIIAEENSELHIITGCATGQDVSSALHVGVSEFYLKKGAKITFTMVHNWAEQVEVRPRTGIMVGDDATYISNYILTSPVKSIQSYPTAYCTGENSRVVFQSILGGQKDSVLDMGSRVILEGRGSSAEMVSRAVSKDASQIYSRGHLAGRVPEVKGHLECHGLVLSDDSMIYAVPELEGSATELEMSHEAAVGKIAEEEVMYLTSRGLTEDEAASMIVRGFLSMDITGLPPELAAETKRMLDMSLKGM.

It belongs to the iron-sulfur cluster assembly SufBD family.

This chain is Iron-sulfur cluster assembly SufBD family protein MTH1150 homolog, found in Methanothermobacter thermautotrophicus (strain Winter) (Methanobacterium thermoautotrophicum).